The following is a 979-amino-acid chain: Peptidyl-glycine alpha-amidating monooxygenase (979 aa).

Residues 1 to 24 form the signal peptide; it reads MAGRARSRLLLLLGLLALQSSCLA. Residues 1–497 are peptidylglycine alpha-hydroxylating monooxygenase; sequence MAGRARSRLL…EGPWEPELAG (497 aa). A propeptide spanning residues 25 to 34 is cleaved from the precursor; sequence FRSPLSVFKR. Residues 35-869 are Intragranular-facing; that stretch reads FKETTRSFSN…KKLIKDPGSG (835 aa). Intrachain disulfides connect Cys46-Cys185, Cys80-Cys125, Cys113-Cys130, Cys226-Cys333, and Cys292-Cys314. His106 and His107 together coordinate Cu(2+). Residues His171, His241, His243, and Met313 each coordinate Cu(2+). Positions 498–823 are peptidyl-alpha-hydroxyglycine alpha-amidating lyase; it reads DFHVEEALEW…SRLEVEHRSV (326 aa). NHL repeat units lie at residues 501-544, 570-611, 620-665, and 673-717; these read VEEA…NSFD, AEIL…LEPR, LGRS…FSPS, and GEES…FKTD. Ca(2+) is bound at residue Val520. Arg533 provides a ligand contact to a protein. Position 585 (His585) interacts with Zn(2+). Leu587 provides a ligand contact to Ca(2+). Cys634 and Cys655 form a disulfide bridge. Residue Tyr654 participates in a protein binding. Zn(2+) is bound at residue His690. Residues Cys702 and Cys713 are joined by a disulfide bond. Arg706 contacts a protein. Asn765 is a glycosylation site (N-linked (GlcNAc...) asparagine). The NHL 5 repeat unit spans residues 769 to 812; the sequence is GEIIDVFKPVRKHFDMPHDIVASEDGTVYIGDAHTNTVWKFTLT. Position 786 (His786) interacts with Zn(2+). A Ca(2+)-binding site is contributed by Asp787. Residues 870 to 893 traverse the membrane as a helical segment; it reads VPVVLITTLLVIPVVVLLAIAMFI. Over 894 to 979 the chain is Cytoplasmic; sequence RWKKSRAFGD…APLPTPAPSS (86 aa). A phosphoserine mark is found at Ser924, Ser925, Ser935, and Ser948. An interaction with RASSF9 region spans residues 931 to 948; it reads NFFASRKGYSRKGFDRVS. Residues 943–979 are disordered; the sequence is GFDRVSTEGSDQEKDEDDGSESEEEYSAPLPTPAPSS. At Thr949 the chain carries Phosphothreonine. Residue Ser952 is modified to Phosphoserine; by UHMK1. Over residues 955–968 the composition is skewed to acidic residues; it reads EKDEDDGSESEEEY. Ser964 is modified (phosphoserine).

In the C-terminal section; belongs to the peptidyl-alpha-hydroxyglycine alpha-amidating lyase family. It in the N-terminal section; belongs to the copper type II ascorbate-dependent monooxygenase family. Monomer. Interacts with RASSF9. The cofactor is Zn(2+). Cu(2+) serves as cofactor.

Its subcellular location is the cytoplasmic vesicle. It is found in the secretory vesicle membrane. The enzyme catalyses a [peptide]-C-terminal glycine + 2 L-ascorbate + O2 = a [peptide]-C-terminal (2S)-2-hydroxyglycine + 2 monodehydro-L-ascorbate radical + H2O. The catalysed reaction is a [peptide]-C-terminal (2S)-2-hydroxyglycine = a [peptide]-C-terminal amide + glyoxylate. It carries out the reaction N-dodecanoylglycine + 2 L-ascorbate + O2 = N-dodecanoyl-(2S)-hydroxyglycine + 2 monodehydro-L-ascorbate radical + H2O. It catalyses the reaction N-dodecanoyl-(2S)-hydroxyglycine = dodecanamide + glyoxylate. The enzyme catalyses N-(9Z,12Z,15Z)-octadecatrienoylglycine + 2 L-ascorbate + O2 = N-(9Z,12Z,15Z)-octadecatrienoyl-(2S)-hydroxyglycine + 2 monodehydro-L-ascorbate radical + H2O. The catalysed reaction is N-(9Z,12Z,15Z)-octadecatrienoyl-(2S)-hydroxyglycine = (9Z,12Z,15Z)-octadecatrienamide + glyoxylate. It carries out the reaction N-(9Z-octadecenoyl)glycine + 2 L-ascorbate + O2 = N-(9Z-octadecenoyl)-(2S)-hydroxyglycine + 2 monodehydro-L-ascorbate radical + H2O. It catalyses the reaction N-(9Z-octadecenoyl)-(2S)-hydroxyglycine = (9Z)-octadecenamide + glyoxylate. The enzyme catalyses N-tetradecanoylglycine + 2 L-ascorbate + O2 = N-tetradecanoyl-(2S)-hydroxyglycine + 2 monodehydro-L-ascorbate radical + H2O. The catalysed reaction is N-tetradecanoyl-(2S)-hydroxyglycine = tetradecamide + glyoxylate. It carries out the reaction N-decanoylglycine + 2 L-ascorbate + O2 = N-decanoyl-(2S)-hydroxyglycine + 2 monodehydro-L-ascorbate radical + H2O. It catalyses the reaction N-decanoyl-(2S)-hydroxyglycine = decanamide + glyoxylate. The enzyme catalyses N-octanoylglycine + 2 L-ascorbate + O2 = N-octanoyl-(2S)-hydroxyglycine + 2 monodehydro-L-ascorbate radical + H2O. The catalysed reaction is N-octanoyl-(2S)-hydroxyglycine = octanamide + glyoxylate. Its activity is regulated as follows. PAM activity is inhibited by EDTA, phenylglyoxal and diethyl pyrocarbonate. PAL activity is stimulated by cadmium and inhibited by mercury. Functionally, bifunctional enzyme that catalyzes amidation of the C-terminus of proteins. Alpha-amidation is present at the C-terminus of many endocrine hormones and neuropeptides and is required for their activity. C-terminal amidation also takes place in response to protein fragmentation triggered by oxidative stress, promoting degradation of amidated protein fragments by the proteasome. Alpha-amidation involves two sequential reactions, both of which are catalyzed by separate catalytic domains of the enzyme. The first step, catalyzed by peptidyl alpha-hydroxylating monooxygenase (PHM) domain, is the copper-, ascorbate-, and O2- dependent stereospecific hydroxylation (with S stereochemistry) at the alpha-carbon (C-alpha) of the C-terminal glycine of the peptidylglycine substrate. The second step, catalyzed by the peptidylglycine amidoglycolate lyase (PAL) domain, is the zinc-dependent cleavage of the N-C-alpha bond, producing the alpha-amidated peptide and glyoxylate. Similarly, catalyzes the two-step conversion of an N-fatty acylglycine to a primary fatty acid amide and glyoxylate. The protein is Peptidyl-glycine alpha-amidating monooxygenase of Mus musculus (Mouse).